We begin with the raw amino-acid sequence, 266 residues long: 2-hydroxyisocaproyl-CoA dehydratase activator (266 aa).

Residues 10 to 14 and 102 to 104 each bind ATP; these read STASK and GQD. [4Fe-4S] cluster is bound at residue C125. ATP is bound at residue D134. C164 is a binding site for [4Fe-4S] cluster. ATP-binding residues include G215 and Q241.

The protein belongs to the HadI activator family. As to quaternary structure, homodimer. Requires [4Fe-4S] cluster as cofactor.

Involved in the reductive branch of L-leucine fermentation. Required for the activation of (R)-2-hydroxyisocaproyl-CoA dehydratase. The reduced activator transfers one electron to the dehydratase concomitant with hydrolysis of ATP. This protein is extremely sensitive towards oxygen. The protein is 2-hydroxyisocaproyl-CoA dehydratase activator of Clostridioides difficile (Peptoclostridium difficile).